We begin with the raw amino-acid sequence, 408 residues long: Imidazolonepropionase (408 aa).

Fe(3+)-binding residues include His73 and His75. Zn(2+) contacts are provided by His73 and His75. 4-imidazolone-5-propanoate is bound by residues Arg82, Tyr145, and His178. Tyr145 serves as a coordination point for N-formimidoyl-L-glutamate. His243 lines the Fe(3+) pocket. His243 is a binding site for Zn(2+). Gln246 contacts 4-imidazolone-5-propanoate. Residue Asp318 coordinates Fe(3+). Position 318 (Asp318) interacts with Zn(2+). N-formimidoyl-L-glutamate contacts are provided by Asn320 and Gly322. Ser323 is a binding site for 4-imidazolone-5-propanoate.

The protein belongs to the metallo-dependent hydrolases superfamily. HutI family. The cofactor is Zn(2+). Requires Fe(3+) as cofactor.

It is found in the cytoplasm. The enzyme catalyses 4-imidazolone-5-propanoate + H2O = N-formimidoyl-L-glutamate. It participates in amino-acid degradation; L-histidine degradation into L-glutamate; N-formimidoyl-L-glutamate from L-histidine: step 3/3. Functionally, catalyzes the hydrolytic cleavage of the carbon-nitrogen bond in imidazolone-5-propanoate to yield N-formimidoyl-L-glutamate. It is the third step in the universal histidine degradation pathway. The sequence is that of Imidazolonepropionase from Shewanella sp. (strain ANA-3).